The chain runs to 150 residues: SsrA-binding protein (150 aa).

This sequence belongs to the SmpB family.

It is found in the cytoplasm. In terms of biological role, required for rescue of stalled ribosomes mediated by trans-translation. Binds to transfer-messenger RNA (tmRNA), required for stable association of tmRNA with ribosomes. tmRNA and SmpB together mimic tRNA shape, replacing the anticodon stem-loop with SmpB. tmRNA is encoded by the ssrA gene; the 2 termini fold to resemble tRNA(Ala) and it encodes a 'tag peptide', a short internal open reading frame. During trans-translation Ala-aminoacylated tmRNA acts like a tRNA, entering the A-site of stalled ribosomes, displacing the stalled mRNA. The ribosome then switches to translate the ORF on the tmRNA; the nascent peptide is terminated with the 'tag peptide' encoded by the tmRNA and targeted for degradation. The ribosome is freed to recommence translation, which seems to be the essential function of trans-translation. This Flavobacterium psychrophilum (strain ATCC 49511 / DSM 21280 / CIP 103535 / JIP02/86) protein is SsrA-binding protein.